The primary structure comprises 814 residues: Kexin (814 aa).

The first 19 residues, M1–A19, serve as a signal peptide directing secretion. The propeptide occupies L20–R109. An N-linked (GlcNAc...) asparagine glycan is attached at N42. The propeptide at L110–P113 is removed by dipeptidylpeptidase STE13. Topologically, residues A114 to H678 are lumenal. D135 lines the Ca(2+) pocket. The Peptidase S8 domain maps to Q141–I453. N163 carries an N-linked (GlcNAc...) asparagine glycan. D175 acts as the Charge relay system in catalysis. D184 lines the Ca(2+) pocket. H213 functions as the Charge relay system in the catalytic mechanism. Residues N227, D277, D320, and E350 each coordinate Ca(2+). Disulfide bonds link C230/C377 and C322/C352. The active-site Charge relay system is S385. 2 N-linked (GlcNAc...) asparagine glycosylation sites follow: N404 and N480. The P/Homo B domain maps to V462–D596. A disordered region spans residues P651–S671. The segment covering T653–P667 has biased composition (low complexity). Residues Y679 to M699 traverse the membrane as a helical segment. The Cytoplasmic segment spans residues K700–S814. Residues S756 to S814 are disordered. Residues N792 to Q801 show a composition bias toward polar residues.

The protein belongs to the peptidase S8 family. Furin subfamily. Ca(2+) serves as cofactor. O-glycosylated.

Its subcellular location is the golgi apparatus. The protein resides in the trans-Golgi network membrane. The catalysed reaction is Cleavage of -Lys-Arg-|-Xaa- and -Arg-Arg-|-Xaa- bonds to process yeast alpha-factor pheromone and killer toxin precursors.. Functionally, processing of precursors of alpha-factors and killer toxin. This Saccharomyces cerevisiae (strain ATCC 204508 / S288c) (Baker's yeast) protein is Kexin (KEX2).